A 94-amino-acid polypeptide reads, in one-letter code: Pyrimidine/purine nucleoside phosphorylase (94 aa).

Belongs to the nucleoside phosphorylase PpnP family.

It carries out the reaction a purine D-ribonucleoside + phosphate = a purine nucleobase + alpha-D-ribose 1-phosphate. The catalysed reaction is adenosine + phosphate = alpha-D-ribose 1-phosphate + adenine. The enzyme catalyses cytidine + phosphate = cytosine + alpha-D-ribose 1-phosphate. It catalyses the reaction guanosine + phosphate = alpha-D-ribose 1-phosphate + guanine. It carries out the reaction inosine + phosphate = alpha-D-ribose 1-phosphate + hypoxanthine. The catalysed reaction is thymidine + phosphate = 2-deoxy-alpha-D-ribose 1-phosphate + thymine. The enzyme catalyses uridine + phosphate = alpha-D-ribose 1-phosphate + uracil. It catalyses the reaction xanthosine + phosphate = alpha-D-ribose 1-phosphate + xanthine. Its function is as follows. Catalyzes the phosphorolysis of diverse nucleosides, yielding D-ribose 1-phosphate and the respective free bases. Can use uridine, adenosine, guanosine, cytidine, thymidine, inosine and xanthosine as substrates. Also catalyzes the reverse reactions. The polypeptide is Pyrimidine/purine nucleoside phosphorylase (Shigella dysenteriae serotype 1 (strain Sd197)).